A 369-amino-acid polypeptide reads, in one-letter code: Endophilin-A (369 aa).

Residues T18–S248 form the BAR domain. Residues Q227–E247 are a coiled coil. A compositionally biased stretch (low complexity) spans G275–P294. The segment at G275–K296 is disordered. The SH3 domain occupies Q305–P364.

This sequence belongs to the endophilin family.

It localises to the cytoplasm. The protein localises to the membrane. In terms of biological role, required presynaptically at the neuromuscular junction. Implicated in synaptic vesicle endocytosis. In Drosophila pseudoobscura pseudoobscura (Fruit fly), this protein is Endophilin-A.